The chain runs to 69 residues: SWDSIWKSAKNKMDKIMRQKVAKWMAKKEGKSVEEVQAKVDAMSKKDIRLHVISHYGKKAFEQLSKSLE.

This sequence belongs to the cationic peptide 06 (cytoinsectotoxin) family. As to expression, expressed by the venom gland.

It localises to the secreted. Functionally, insecticidal and antimicrobial peptide. Has insecticidal activity against larvae of flesh fly S.carnaria. Has antibacterial activity against Gram-positive bacterium B.subtilis B-501 (MIC=1.25 uM) and Gram-negative bacterium E.coli DH5alpha (MIC=2.5 uM). This chain is Cytoinsectotoxin-2a, found in Lachesana tarabaevi (Spider).